The chain runs to 299 residues: ATP synthase gamma chain (299 aa).

This sequence belongs to the ATPase gamma chain family. In terms of assembly, F-type ATPases have 2 components, CF(1) - the catalytic core - and CF(0) - the membrane proton channel. CF(1) has five subunits: alpha(3), beta(3), gamma(1), delta(1), epsilon(1). CF(0) has three main subunits: a, b and c.

The protein resides in the cell membrane. Functionally, produces ATP from ADP in the presence of a proton gradient across the membrane. The gamma chain is believed to be important in regulating ATPase activity and the flow of protons through the CF(0) complex. In Levilactobacillus brevis (strain ATCC 367 / BCRC 12310 / CIP 105137 / JCM 1170 / LMG 11437 / NCIMB 947 / NCTC 947) (Lactobacillus brevis), this protein is ATP synthase gamma chain.